We begin with the raw amino-acid sequence, 74 residues long: SPbeta prophage-derived uncharacterized HTH-type transcriptional regulator YopS (74 aa).

The region spanning 11–66 (IPELCRKKDITINELSEITGIKKQQLSDYNRLVKVDMSIRTAKRIAAALDCNVEDL) is the HTH cro/C1-type domain. The segment at residues 22–41 (INELSEITGIKKQQLSDYNR) is a DNA-binding region (H-T-H motif).

The chain is SPbeta prophage-derived uncharacterized HTH-type transcriptional regulator YopS (yopS) from Bacillus subtilis (strain 168).